The chain runs to 130 residues: Small ribosomal subunit protein uS11 (130 aa).

It belongs to the universal ribosomal protein uS11 family. As to quaternary structure, part of the 30S ribosomal subunit. Interacts with proteins S7 and S18. Binds to IF-3.

Functionally, located on the platform of the 30S subunit, it bridges several disparate RNA helices of the 16S rRNA. Forms part of the Shine-Dalgarno cleft in the 70S ribosome. The chain is Small ribosomal subunit protein uS11 from Alteromonas mediterranea (strain DSM 17117 / CIP 110805 / LMG 28347 / Deep ecotype).